Reading from the N-terminus, the 377-residue chain is Succinyl-diaminopimelate desuccinylase (377 aa).

H68 lines the Zn(2+) pocket. D70 is an active-site residue. D101 lines the Zn(2+) pocket. The Proton acceptor role is filled by E135. E136, E164, and H350 together coordinate Zn(2+).

The protein belongs to the peptidase M20A family. DapE subfamily. In terms of assembly, homodimer. Requires Zn(2+) as cofactor. It depends on Co(2+) as a cofactor.

It catalyses the reaction N-succinyl-(2S,6S)-2,6-diaminopimelate + H2O = (2S,6S)-2,6-diaminopimelate + succinate. Its pathway is amino-acid biosynthesis; L-lysine biosynthesis via DAP pathway; LL-2,6-diaminopimelate from (S)-tetrahydrodipicolinate (succinylase route): step 3/3. In terms of biological role, catalyzes the hydrolysis of N-succinyl-L,L-diaminopimelic acid (SDAP), forming succinate and LL-2,6-diaminopimelate (DAP), an intermediate involved in the bacterial biosynthesis of lysine and meso-diaminopimelic acid, an essential component of bacterial cell walls. The polypeptide is Succinyl-diaminopimelate desuccinylase (Acinetobacter baumannii (strain AB0057)).